Consider the following 440-residue polypeptide: 5-methylthioadenosine/S-adenosylhomocysteine deaminase (440 aa).

Residues histidine 69 and histidine 71 each coordinate Zn(2+). 2 residues coordinate substrate: glutamate 98 and histidine 190. Zn(2+) is bound at residue histidine 217. Residues glutamate 220 and aspartate 305 each coordinate substrate. Aspartate 305 is a binding site for Zn(2+).

Belongs to the metallo-dependent hydrolases superfamily. MTA/SAH deaminase family. The cofactor is Zn(2+).

The catalysed reaction is S-adenosyl-L-homocysteine + H2O + H(+) = S-inosyl-L-homocysteine + NH4(+). It catalyses the reaction S-methyl-5'-thioadenosine + H2O + H(+) = S-methyl-5'-thioinosine + NH4(+). Functionally, catalyzes the deamination of 5-methylthioadenosine and S-adenosyl-L-homocysteine into 5-methylthioinosine and S-inosyl-L-homocysteine, respectively. Is also able to deaminate adenosine. The polypeptide is 5-methylthioadenosine/S-adenosylhomocysteine deaminase (Desulfovibrio desulfuricans (strain ATCC 27774 / DSM 6949 / MB)).